The following is a 297-amino-acid chain: Formamidopyrimidine-DNA glycosylase (297 aa).

Residue proline 2 is the Schiff-base intermediate with DNA of the active site. Glutamate 3 (proton donor) is an active-site residue. Catalysis depends on lysine 58, which acts as the Proton donor; for beta-elimination activity. The DNA site is built by histidine 106, arginine 133, and arginine 178. The segment at phenylalanine 263–histidine 297 adopts an FPG-type zinc-finger fold. Arginine 287 serves as the catalytic Proton donor; for delta-elimination activity.

It belongs to the FPG family. As to quaternary structure, monomer. Zn(2+) is required as a cofactor.

It catalyses the reaction Hydrolysis of DNA containing ring-opened 7-methylguanine residues, releasing 2,6-diamino-4-hydroxy-5-(N-methyl)formamidopyrimidine.. It carries out the reaction 2'-deoxyribonucleotide-(2'-deoxyribose 5'-phosphate)-2'-deoxyribonucleotide-DNA = a 3'-end 2'-deoxyribonucleotide-(2,3-dehydro-2,3-deoxyribose 5'-phosphate)-DNA + a 5'-end 5'-phospho-2'-deoxyribonucleoside-DNA + H(+). Involved in base excision repair of DNA damaged by oxidation or by mutagenic agents. Acts as a DNA glycosylase that recognizes and removes damaged bases. Has a preference for oxidized purines, such as 7,8-dihydro-8-oxoguanine (8-oxoG). Has AP (apurinic/apyrimidinic) lyase activity and introduces nicks in the DNA strand. Cleaves the DNA backbone by beta-delta elimination to generate a single-strand break at the site of the removed base with both 3'- and 5'-phosphates. In Cupriavidus metallidurans (strain ATCC 43123 / DSM 2839 / NBRC 102507 / CH34) (Ralstonia metallidurans), this protein is Formamidopyrimidine-DNA glycosylase.